The sequence spans 96 residues: Co-chaperonin GroES (96 aa).

It belongs to the GroES chaperonin family. In terms of assembly, heptamer of 7 subunits arranged in a ring. Interacts with the chaperonin GroEL.

The protein resides in the cytoplasm. In terms of biological role, together with the chaperonin GroEL, plays an essential role in assisting protein folding. The GroEL-GroES system forms a nano-cage that allows encapsulation of the non-native substrate proteins and provides a physical environment optimized to promote and accelerate protein folding. GroES binds to the apical surface of the GroEL ring, thereby capping the opening of the GroEL channel. The chain is Co-chaperonin GroES from Pelagibacter ubique (strain HTCC1062).